The following is a 360-amino-acid chain: Malate dehydrogenase (360 aa).

The protein belongs to the LDH2/MDH2 oxidoreductase family. As to quaternary structure, homodimer.

The protein resides in the cytoplasm. It carries out the reaction (S)-malate + NAD(+) = oxaloacetate + NADH + H(+). The polypeptide is Malate dehydrogenase (mdh) (Pyrococcus horikoshii (strain ATCC 700860 / DSM 12428 / JCM 9974 / NBRC 100139 / OT-3)).